Consider the following 593-residue polypeptide: NADH-quinone oxidoreductase subunit C/D (593 aa).

Residues 1-184 (MTADNALYIP…DPYSLTLAKQ (184 aa)) form an NADH dehydrogenase I subunit C region. Residues 208 to 593 (DYMFLNLGPN…IDFVMADVDR (386 aa)) are NADH dehydrogenase I subunit D.

It in the N-terminal section; belongs to the complex I 30 kDa subunit family. The protein in the C-terminal section; belongs to the complex I 49 kDa subunit family. NDH-1 is composed of 13 different subunits. Subunits NuoB, CD, E, F, and G constitute the peripheral sector of the complex.

The protein localises to the cell inner membrane. It catalyses the reaction a quinone + NADH + 5 H(+)(in) = a quinol + NAD(+) + 4 H(+)(out). Functionally, NDH-1 shuttles electrons from NADH, via FMN and iron-sulfur (Fe-S) centers, to quinones in the respiratory chain. The immediate electron acceptor for the enzyme in this species is believed to be ubiquinone. Couples the redox reaction to proton translocation (for every two electrons transferred, four hydrogen ions are translocated across the cytoplasmic membrane), and thus conserves the redox energy in a proton gradient. This Pseudomonas syringae pv. tomato (strain ATCC BAA-871 / DC3000) protein is NADH-quinone oxidoreductase subunit C/D.